The sequence spans 470 residues: ATP synthase subunit beta (470 aa).

155–162 (GGAGVGKT) contacts ATP.

It belongs to the ATPase alpha/beta chains family. As to quaternary structure, F-type ATPases have 2 components, CF(1) - the catalytic core - and CF(0) - the membrane proton channel. CF(1) has five subunits: alpha(3), beta(3), gamma(1), delta(1), epsilon(1). CF(0) has three main subunits: a(1), b(2) and c(9-12). The alpha and beta chains form an alternating ring which encloses part of the gamma chain. CF(1) is attached to CF(0) by a central stalk formed by the gamma and epsilon chains, while a peripheral stalk is formed by the delta and b chains.

It is found in the cell membrane. It catalyses the reaction ATP + H2O + 4 H(+)(in) = ADP + phosphate + 5 H(+)(out). Its function is as follows. Produces ATP from ADP in the presence of a proton gradient across the membrane. The catalytic sites are hosted primarily by the beta subunits. The chain is ATP synthase subunit beta from Pectinatus frisingensis.